Here is a 199-residue protein sequence, read N- to C-terminus: Probable chemoreceptor glutamine deamidase CheD (199 aa).

Belongs to the CheD family.

The enzyme catalyses L-glutaminyl-[protein] + H2O = L-glutamyl-[protein] + NH4(+). Functionally, probably deamidates glutamine residues to glutamate on methyl-accepting chemotaxis receptors (MCPs), playing an important role in chemotaxis. This is Probable chemoreceptor glutamine deamidase CheD from Cereibacter sphaeroides (Rhodobacter sphaeroides).